The sequence spans 149 residues: Transcriptional repressor NrdR (149 aa).

Residues 3-34 fold into a zinc finger; sequence CPFCSATDTKVIDSRLVSDGHQVRRRRQCLAC. The 91-residue stretch at 49-139 folds into the ATP-cone domain; that stretch reads PKVIKSNGNR…VYRSFEDIKE (91 aa).

The protein belongs to the NrdR family. Requires Zn(2+) as cofactor.

Its function is as follows. Negatively regulates transcription of bacterial ribonucleotide reductase nrd genes and operons by binding to NrdR-boxes. This Aliivibrio fischeri (strain ATCC 700601 / ES114) (Vibrio fischeri) protein is Transcriptional repressor NrdR.